The chain runs to 202 residues: Adenylyl-sulfate kinase (202 aa).

31–38 (GLSASGKS) is a binding site for ATP. Catalysis depends on serine 105, which acts as the Phosphoserine intermediate.

This sequence belongs to the APS kinase family.

It catalyses the reaction adenosine 5'-phosphosulfate + ATP = 3'-phosphoadenylyl sulfate + ADP + H(+). It participates in sulfur metabolism; hydrogen sulfide biosynthesis; sulfite from sulfate: step 2/3. Its function is as follows. Catalyzes the synthesis of activated sulfate. The chain is Adenylyl-sulfate kinase (MET14) from Saccharomyces pastorianus (Lager yeast).